The following is a 357-amino-acid chain: UDP-N-acetylglucosamine--N-acetylmuramyl-(pentapeptide) pyrophosphoryl-undecaprenol N-acetylglucosamine transferase (357 aa).

UDP-N-acetyl-alpha-D-glucosamine is bound by residues 13–15 (SAG), Arg166, Ser196, and Gln291.

The protein belongs to the glycosyltransferase 28 family. MurG subfamily.

Its subcellular location is the cell membrane. The enzyme catalyses di-trans,octa-cis-undecaprenyl diphospho-N-acetyl-alpha-D-muramoyl-L-alanyl-D-glutamyl-meso-2,6-diaminopimeloyl-D-alanyl-D-alanine + UDP-N-acetyl-alpha-D-glucosamine = di-trans,octa-cis-undecaprenyl diphospho-[N-acetyl-alpha-D-glucosaminyl-(1-&gt;4)]-N-acetyl-alpha-D-muramoyl-L-alanyl-D-glutamyl-meso-2,6-diaminopimeloyl-D-alanyl-D-alanine + UDP + H(+). The protein operates within cell wall biogenesis; peptidoglycan biosynthesis. Cell wall formation. Catalyzes the transfer of a GlcNAc subunit on undecaprenyl-pyrophosphoryl-MurNAc-pentapeptide (lipid intermediate I) to form undecaprenyl-pyrophosphoryl-MurNAc-(pentapeptide)GlcNAc (lipid intermediate II). This chain is UDP-N-acetylglucosamine--N-acetylmuramyl-(pentapeptide) pyrophosphoryl-undecaprenol N-acetylglucosamine transferase, found in Clostridium perfringens (strain SM101 / Type A).